The primary structure comprises 299 residues: Protein FAM228A (299 aa).

The tract at residues 135 to 201 (AKGTSYQHGR…GRNRYKGASS (67 aa)) is disordered. Residues 146 to 159 (KTHDTQKEAKETEK) are compositionally biased toward basic and acidic residues. A Phosphoserine modification is found at Ser264.

This sequence belongs to the FAM228 family.

The chain is Protein FAM228A (Fam228a) from Mus musculus (Mouse).